The chain runs to 309 residues: Protein FdhE (309 aa).

It belongs to the FdhE family.

It localises to the cytoplasm. Its function is as follows. Necessary for formate dehydrogenase activity. The protein is Protein FdhE of Salmonella arizonae (strain ATCC BAA-731 / CDC346-86 / RSK2980).